Consider the following 521-residue polypeptide: GMP synthase [glutamine-hydrolyzing] (521 aa).

Residues 8–203 enclose the Glutamine amidotransferase type-1 domain; that stretch reads KILILDFGAQ…VVDICGCQTL (196 aa). The Nucleophile role is filled by C85. Residues H177 and E179 contribute to the active site. Positions 204–396 constitute a GMPS ATP-PPase domain; it reads WTAANIIDDQ…LGLPRTMVYR (193 aa). 231–237 provides a ligand contact to ATP; sequence SGGVDSS.

Homodimer.

It catalyses the reaction XMP + L-glutamine + ATP + H2O = GMP + L-glutamate + AMP + diphosphate + 2 H(+). The protein operates within purine metabolism; GMP biosynthesis; GMP from XMP (L-Gln route): step 1/1. Catalyzes the synthesis of GMP from XMP. The sequence is that of GMP synthase [glutamine-hydrolyzing] from Xanthomonas oryzae pv. oryzae (strain PXO99A).